The primary structure comprises 166 residues: Arginine repressor (166 aa).

This sequence belongs to the ArgR family.

The protein resides in the cytoplasm. It functions in the pathway amino-acid biosynthesis; L-arginine biosynthesis [regulation]. Its function is as follows. Regulates arginine biosynthesis genes. This chain is Arginine repressor, found in Mycobacterium ulcerans (strain Agy99).